The primary structure comprises 462 residues: Tubby-like F-box protein 7 (462 aa).

The F-box domain occupies 54 to 109 (SKWAGLPPELLRDVMKRLEEDDSNWPSRKDVVACASVCTTWRDMCKDIVRNPEFCG). 2 disordered regions span residues 317–338 (FSEF…DDVN) and 383–418 (QPSS…SSSN). Positions 383-417 (QPSSGAASEPSQAGQAAQQQTQPSQPSSSSSSSSS) are enriched in low complexity.

This sequence belongs to the TUB family. Ubiquitous.

The protein is Tubby-like F-box protein 7 (TULP7) of Oryza sativa subsp. japonica (Rice).